A 497-amino-acid polypeptide reads, in one-letter code: Bypass of stop codon protein 6 (497 aa).

The Lumenal segment spans residues 1 to 72 (MDASSVPPKV…KVKTYPLNYQ (72 aa)). A phosphoserine mark is found at serine 37 and serine 41. A glycan (N-linked (GlcNAc...) asparagine) is linked at asparagine 49. A helical transmembrane segment spans residues 73–93 (TVPLVKLQVIACLIMFVVFGM). The Cytoplasmic portion of the chain corresponds to 94 to 144 (NDQTVGALLPTLIEYYHISRVDVSNVFIVQLCGYVMASLSKERLNKHFGMR). The chain crosses the membrane as a helical span at residues 145-165 (GGMLLAAGLCIVFLIILATAP). Topologically, residues 166-167 (SS) are lumenal. A helical transmembrane segment spans residues 168–188 (FYVCMFCGLPLGLGIGILDST). Residues 189-205 (GNVLMGSLLVHKNELMG) are Cytoplasmic-facing. A helical transmembrane segment spans residues 206 to 226 (IMHGLYGAAAMVTPPLVSYFV). Topologically, residues 227–232 (EWGHWS) are lumenal. A helical transmembrane segment spans residues 233-253 (LFFLIPLFFSIIGMIVIFPAF). The Cytoplasmic portion of the chain corresponds to 254–300 (KFETASKYDYLCSVENKESNNDVEEAGDNSLMESTKASPGFFELLRN). A helical transmembrane segment spans residues 301–321 (PAIFLYSLYLFLYLGAEITTG). The Lumenal segment spans residues 322–340 (SWFFSYLLETKSSNKVAMS). The chain crosses the membrane as a helical span at residues 341-361 (YIAASFWTGLTVGRLCLGFVT). Over 362–373 (ERFFENEYKASK) the chain is Cytoplasmic. The helical transmembrane segment at 374 to 394 (AYAFLTLSSYTLFVLVGLINS) threads the bilayer. The Lumenal segment spans residues 395–397 (SSV). A helical transmembrane segment spans residues 398 to 418 (FYFVVLFFVVFCCGTFIGPLF). Residues 419–439 (PNASIVALQVLPKRLHVSGVG) lie on the Cytoplasmic side of the membrane. A helical membrane pass occupies residues 440 to 460 (VAVAVGGCGGAAIPYLAGVIA). Topologically, residues 461-462 (HT) are lumenal. The helical transmembrane segment at 463–483 (VGIQYIPLLCWIMVALFTLEW) threads the bilayer. Residues 484–497 (TLYPKFIKGHEEYF) lie on the Cytoplasmic side of the membrane.

It belongs to the major facilitator superfamily.

It localises to the golgi apparatus. The protein localises to the cis-Golgi network membrane. In terms of biological role, probable transporter. In Saccharomyces cerevisiae (strain ATCC 204508 / S288c) (Baker's yeast), this protein is Bypass of stop codon protein 6 (BSC6).